We begin with the raw amino-acid sequence, 267 residues long: Integral membrane protein 2C (267 aa).

T37 carries the post-translational modification Phosphothreonine. Residues 55 to 75 (VGGVCYLSMGMVVLLMGLVFA) traverse the membrane as a helical; Signal-anchor for type II membrane protein segment. A BRICHOS domain is found at 136 to 230 (FGGGDPADII…LCNGKDTYRL (95 aa)). C163 and C222 form a disulfide bridge. N169 is a glycosylation site (N-linked (GlcNAc...) asparagine).

This sequence belongs to the ITM2 family. As to quaternary structure, interacts with BACE1. Interacts with APP. Interacts with STMN2. Type I membrane-bound, as well as soluble, furin has a pre-eminent role in ITM2C proteolytic processing. PCSK7 and PCSK5 may also be involved although to a lesser extent. The soluble form of PCSK7 is incapable of processing ITM2C. Fails to undergo shedding by ADAM10 and intramembrane cleavage by SPPL2B.

It is found in the lysosome membrane. The protein resides in the cell membrane. Functionally, negative regulator of amyloid-beta peptide production. May inhibit the processing of APP by blocking its access to alpha- and beta-secretase. Binding to the beta-secretase-cleaved APP C-terminal fragment is negligible, suggesting that ITM2C is a poor gamma-secretase cleavage inhibitor. May play a role in TNF-induced cell death and neuronal differentiation. The chain is Integral membrane protein 2C (ITM2C) from Pongo abelii (Sumatran orangutan).